A 291-amino-acid chain; its full sequence is Polyamine aminopropyltransferase (291 aa).

The PABS domain occupies 5–245 (PGPISLIEPL…YAVNYILGSL (241 aa)). Residue glutamine 36 participates in S-methyl-5'-thioadenosine binding. Residues histidine 67 and glutamate 91 each coordinate spermidine. S-methyl-5'-thioadenosine-binding positions include aspartate 111 and 143–144 (DG). Aspartate 164 acts as the Proton acceptor in catalysis.

Belongs to the spermidine/spermine synthase family. In terms of assembly, homodimer or homotetramer.

The protein resides in the cytoplasm. It carries out the reaction S-adenosyl 3-(methylsulfanyl)propylamine + putrescine = S-methyl-5'-thioadenosine + spermidine + H(+). It functions in the pathway amine and polyamine biosynthesis; spermidine biosynthesis; spermidine from putrescine: step 1/1. Functionally, catalyzes the irreversible transfer of a propylamine group from the amino donor S-adenosylmethioninamine (decarboxy-AdoMet) to putrescine (1,4-diaminobutane) to yield spermidine. This chain is Polyamine aminopropyltransferase, found in Pyrobaculum neutrophilum (strain DSM 2338 / JCM 9278 / NBRC 100436 / V24Sta) (Thermoproteus neutrophilus).